A 677-amino-acid chain; its full sequence is MGSGYQLLQLPRERFRKTSFLVWVIILFQRAISMPLGIVTNSTLKATEIDQLVCRDKLSSTSQLKSVGLNLEGNGIATDVPSATKRWGFRSGVPPKVVSYEAGEWAENCYNLEIKKSDGSECLPLPPDGVRGFPRCRYVHKVQGTGPCPGDLAFHKNGAFFLYDRLASTVIYRGTTFAEGVIAFLILSEPKKHFWKATPAHEPVNTTDDSTSYYMTLTLSYEMSNFGGEESNTLFKVDNHTYVQLDRPHTPQFLVQLNETLRRNNRLSNSTGRLTWTVDPKIEPDVGEWAFWETKKNFSQQLHGENLHFQILSTHTNNSSDQSPAGTVQGKISYHPPTNNSELVPTDSPPVVSVLTAGRTEEMSTQGLTNGETITGFTANPMTTTIAPSPTMTSEVDNNVPSEQPNNTASIEDSPPSASNETIDHSEMNSIQGSNNSAQSPQTKATPAPTASPMTLDPQETANISKPGTSPGSAAGPSQPGLTINTISKVADSLSPTRKQKRSVRQNTANKCNPDLHYWTAVDEGAAAGLAWIPYFGPAAEGIYIEGVMHNQNGLICGLRQLANETTQALQLFLRATTELRTYSLLNRKAIDFLLQRWGGTCRILGPSCCIEPHDWTKNITDEINQIKHDFIDNPLPDHGDDLNLWTGWRQWIPAGIGIIGVIIAIIALLCICKILC.

The first 33 residues, 1–33 (MGSGYQLLQLPRERFRKTSFLVWVIILFQRAIS), serve as a signal peptide directing secretion. The Extracellular segment spans residues 34–651 (MPLGIVTNST…DLNLWTGWRQ (618 aa)). N-linked (GlcNAc...) asparagine; by host glycosylation occurs at asparagine 41. Intrachain disulfides connect cysteine 54–cysteine 610, cysteine 109–cysteine 136, cysteine 122–cysteine 148, cysteine 512–cysteine 557, and cysteine 602–cysteine 609. Positions 55-202 (RDKLSSTSQL…HFWKATPAHE (148 aa)) are receptor-binding. Asparagine 205, asparagine 239, asparagine 258, asparagine 269, asparagine 297, asparagine 317, asparagine 318, asparagine 339, asparagine 406, asparagine 420, asparagine 435, and asparagine 463 each carry an N-linked (GlcNAc...) asparagine; by host glycan. The mucin-like region stretch occupies residues 306-486 (NLHFQILSTH…PSQPGLTINT (181 aa)). Over residues 315 to 326 (HTNNSSDQSPAG) the composition is skewed to polar residues. Disordered regions lie at residues 315–349 (HTNNSSDQSPAGTVQGKISYHPPTNNSELVPTDSP), 370–483 (NGET…PGLT), and 489–508 (KVADSLSPTRKQKRSVRQNT). 3 stretches are compositionally biased toward polar residues: residues 370-421 (NGET…ASNE), 428-445 (MNSIQGSNNSAQSPQTKA), and 458-472 (PQETANISKPGTSPG). The segment at 525 to 540 (GAAAGLAWIPYFGPAA) is fusion peptide. A coiled-coil region spans residues 555–596 (LICGLRQLANETTQALQLFLRATTELRTYSLLNRKAIDFLLQ). A glycan (N-linked (GlcNAc...) asparagine; by host) is linked at asparagine 564. The stretch at 616 to 635 (WTKNITDEINQIKHDFIDNP) forms a coiled coil. Residue asparagine 619 is glycosylated (N-linked (GlcNAc...) asparagine; by host). The chain crosses the membrane as a helical span at residues 652-672 (WIPAGIGIIGVIIAIIALLCI). Residues cysteine 671 and cysteine 673 are each lipidated (S-palmitoyl cysteine; by host). Residues 673-677 (CKILC) lie on the Cytoplasmic side of the membrane.

The protein belongs to the filoviruses glycoprotein family. In terms of assembly, homotrimer; each monomer consists of a GP1 and a GP2 subunit linked by disulfide bonds. The resulting peplomers (GP1,2) protrude from the virus surface as spikes. Interacts with host integrin alpha-V/ITGAV. Interacts with host CLEC10A. Binds also to host CD209 and CLEC4M/DC-SIGN(R). Interacts with host FOLR1. Interacts with BST2; this interaction inhibits the antiviral effect of BST2 and this allows viral release from infected cells. Interacts with host FCN1; this interaction enhances viral entry. Interacts with host TLR4; this interaction induces cell death in T-lymphocytes or proinflammatory cytokines and SOCS1 production in monocytes. As to quaternary structure, interacts with host entry receptor NPC1. GP1 and GP2delta are part of GP1,2delta soluble complexes released by ectodomain shedding. In terms of processing, the signal peptide region modulates GP's high mannose glycosylation, thereby determining the efficiency of the interactions with DC-SIGN(R). Post-translationally, N-glycosylated. O-glycosylated in the mucin-like region. In terms of processing, palmitoylation of GP2 is not required for its function. Post-translationally, specific enzymatic cleavages in vivo yield mature proteins. The precursor is processed into GP1 and GP2 by host cell furin in the trans Golgi, and maybe by other host proteases, to yield the mature GP1 and GP2 proteins. The cleavage site corresponds to the furin optimal cleavage sequence [KR]-X-[KR]-R. This cleavage does not seem to be required for function. After the internalization of the virus into cell endosomes, GP1 C-terminus is removed by the endosomal proteases cathepsin B, cathepsin L, or both, leaving a 19-kDa N-terminal fragment which is further digested by cathepsin B. Proteolytic processing of GP1,2 by host ADAM17 can remove the transmembrane anchor of GP2 and leads to shedding of complexes consisting in GP1 and truncated GP2 (GP1,2delta).

It is found in the virion membrane. The protein localises to the host cell membrane. Its subcellular location is the secreted. Functionally, trimeric GP1,2 complexes form the virion surface spikes and mediate the viral entry processes, with GP1 acting as the receptor-binding subunit and GP2 as the membrane fusion subunit. At later times of infection, down-regulates the expression of various host cell surface molecules that are essential for immune surveillance and cell adhesion. Down-modulates several integrins including ITGA1, ITGA2, ITGA3, ITGA4, ITGA5, ITGA6, ITGAV and ITGB1. This decrease in cell adhesion molecules may lead to cell detachment, contributing to the disruption of blood vessel integrity and hemorrhages developed during infection (cytotoxicity). Interacts with host TLR4 and thereby stimulates the differentiation and activation of monocytes leading to bystander death of T-lymphocytes. Down-regulates as well the function of host natural killer cells. Counteracts the antiviral effect of host BST2/tetherin that restricts release of progeny virions from infected cells. However, cooperates with VP40 and host BST2 to activate canonical NF-kappa-B pathway in a manner dependent on neddylation. Its function is as follows. Functions as a decoy for anti-GP1,2 antibodies thereby contributing to viral immune evasion. Interacts and activates host macrophages and dendritic cells inducing up-regulation of cytokine transcription. This effect is mediated throught activation of host TLR4. In terms of biological role, responsible for binding to the receptor(s) on target cells. Interacts with CD209/DC-SIGN and CLEC4M/DC-SIGNR which act as cofactors for virus entry into dendritic cells (DCs) and endothelial cells. Binding to the macrophage specific lectin CLEC10A also seems to enhance virus infectivity. Interaction with FOLR1/folate receptor alpha may be a cofactor for virus entry in some cell types, although results are contradictory. Members of the Tyro3 receptor tyrosine kinase family also seem to be cell entry factors in filovirus infection. Once attached, the virions are internalized through clathrin-dependent endocytosis and/or macropinocytosis. After internalization of the virus into the endosomes of the host cell, proteolysis of GP1 by two cysteine proteases, CTSB/cathepsin B and CTSL/cathepsin L removes the glycan cap and allows GP1 binding to the host entry receptor NPC1. NPC1-binding, Ca(2+) and acidic pH induce a conformational change of GP2, which unmasks its fusion peptide and permit membranes fusion. Acts as a class I viral fusion protein. Under the current model, the protein has at least 3 conformational states: pre-fusion native state, pre-hairpin intermediate state, and post-fusion hairpin state. During viral and target cell membrane fusion, the coiled coil regions (heptad repeats) assume a trimer-of-hairpins structure, positioning the fusion peptide in close proximity to the C-terminal region of the ectodomain. The formation of this structure appears to drive apposition and subsequent fusion of viral and target cell membranes. Responsible for penetration of the virus into the cell cytoplasm by mediating the fusion of the membrane of the endocytosed virus particle with the endosomal membrane. Low pH in endosomes induces an irreversible conformational change in GP2, releasing the fusion hydrophobic peptide. This Reston ebolavirus (strain Philippines-96) (REBOV) protein is Envelope glycoprotein (GP).